The primary structure comprises 1217 residues: Disease resistance protein RPS4 (1217 aa).

The TIR domain maps to 14–175; sequence PQHQVFINFR…EIVKAVKTAL (162 aa). 23–28 serves as a coordination point for NAD(+); sequence RGADLR. Residues 33 to 34 are important for interaction with RRS1; that stretch reads SH. Residue Glu-88 is part of the active site. An NB-ARC domain is found at 211–472; that stretch reads EQRLKDLEEK…FRSQDKDYVE (262 aa). LRR repeat units lie at residues 581-606, 614-636, 637-659, 682-706, 708-728, 729-749, 750-774, 796-818, 819-842, 843-860, and 861-887; these read MGNL…KINI, LKEV…DFNP, INLV…DKDT, AEKL…MKKM, MLAF…EMNL, ISLK…PLIS, DNIE…KLQR, LKAL…EIDI, SFLN…SVQY, LCLS…GISQ, and LSQL…NLQC. A disordered region spans residues 1161 to 1195; that stretch reads TTEGVDGRVNKKKKTRMDNGRPKKKQRSGRDDNQT. A Nuclear localization signal motif is present at residues 1170 to 1177; it reads NKKKKTRM.

The protein belongs to the disease resistance TIR-NB-LRR family. As to quaternary structure, interacts with EDS1. Interacts with SRFR1. Interacts with RRS1.

It localises to the endomembrane system. The protein resides in the cytoplasm. Its subcellular location is the nucleus. The catalysed reaction is NAD(+) + H2O = ADP-D-ribose + nicotinamide + H(+). In terms of biological role, disease resistance (R) protein that specifically recognizes the AvrRps4 type III effector avirulence protein from P.syringae. Resistance proteins guard the plant against pathogens that contain an appropriate avirulence protein via an indirect interaction with this avirulence protein. That triggers a defense system including the hypersensitive response, which restricts the pathogen growth. Probably acts as a NAD(+) hydrolase (NADase): in response to activation, catalyzes cleavage of NAD(+) into ADP-D-ribose (ADPR) and nicotinamide; NAD(+) cleavage triggering a defense system that promotes cell death. The combined presence of both regular and alternative RPS4 transcripts with truncated open reading frames (ORFs) is necessary for function. RPS4 function is regulated at multiple levels, including gene expression, alternative splicing, and protein stability. When over-expressed, confers temperature-conditioned EDS1-dependent auto-immunity. Heterodimerization with RRS1 is required to form a functional complex to recognize AvrRps4 and PopP2. Abscisic acid deficiency enhances nuclear accumulation of RPS4 and its cell death-inducing activity. The sequence is that of Disease resistance protein RPS4 from Arabidopsis thaliana (Mouse-ear cress).